The following is a 154-amino-acid chain: Large ribosomal subunit protein uL13 (154 aa).

The protein belongs to the universal ribosomal protein uL13 family. As to quaternary structure, part of the 50S ribosomal subunit.

Functionally, this protein is one of the early assembly proteins of the 50S ribosomal subunit, although it is not seen to bind rRNA by itself. It is important during the early stages of 50S assembly. This Brucella melitensis biotype 2 (strain ATCC 23457) protein is Large ribosomal subunit protein uL13.